The following is a 330-amino-acid chain: GDP-mannose transporter (330 aa).

Topologically, residues 1–13 (MSQLKVDNGPLSH) are cytoplasmic. A helical membrane pass occupies residues 14–34 (VANSGPISIGAYCFSSIMMTV). At 35–48 (TNKFVVNLKGFNMN) the chain is on the lumenal side. The helical transmembrane segment at 49–69 (FVMLFVQAAVCVNLLFFLRLL) threads the bilayer. At 70 to 81 (GYAKFRPLNRTD) the chain is on the cytoplasmic side. The chain crosses the membrane as a helical span at residues 82-98 (AKNWFPITIFLVLMIYT). The Lumenal portion of the chain corresponds to 99 to 104 (SSKSLQ). Residues 105-124 (YLAVPIYTIFKNLTIILIAY) traverse the membrane as a helical segment. The Cytoplasmic portion of the chain corresponds to 125–138 (GEVLFFGGSVTAME). The chain crosses the membrane as a helical span at residues 139–155 (LSSFLLMVLSSVVATLG). At 156–170 (DQQALKKTADAGASL) the chain is on the lumenal side. Residues 171 to 191 (FNIGYMWMFINCLSSAAFVLV) form a helical membrane-spanning segment. The Cytoplasmic portion of the chain corresponds to 192-203 (MRKRIKLTNFKD). Residues 204–224 (FDTMFYNNILSMPVLLALSFL) traverse the membrane as a helical segment. Residues 225-241 (MEDWSTENLTKNLSRDS) are Lumenal-facing. Residues 242–262 (VTAMIISGMTAVCISYCSGWC) traverse the membrane as a helical segment. Residues 263 to 269 (VRVTSST) are Cytoplasmic-facing. Residues 270-290 (TYSMVGALNKLPIALSGLIFF) traverse the membrane as a helical segment. Over 291–294 (DAPK) the chain is Lumenal. The helical transmembrane segment at 295 to 315 (NFLSIFSIFLGFLSGIVYAVA) threads the bilayer. At 316–330 (KQKKQQNPQPSAPIK) the chain is on the cytoplasmic side.

It belongs to the TPT transporter family. SLC35D subfamily. In terms of assembly, homooligomer.

The protein resides in the golgi apparatus membrane. Its subcellular location is the cytoplasmic vesicle membrane. It is found in the endoplasmic reticulum membrane. Its function is as follows. Involved in the import of GDP-mannose from the cytoplasm into the Golgi lumen. The sequence is that of GDP-mannose transporter (VRG4) from Kluyveromyces lactis (strain ATCC 8585 / CBS 2359 / DSM 70799 / NBRC 1267 / NRRL Y-1140 / WM37) (Yeast).